Reading from the N-terminus, the 448-residue chain is Serine--tRNA ligase (448 aa).

L-serine is bound at residue T255 to E257. ATP is bound at residue R286–E288. Position 309 (E309) interacts with L-serine. Residue E373 to S376 coordinates ATP. Residue S408 coordinates L-serine.

It belongs to the class-II aminoacyl-tRNA synthetase family. Type-1 seryl-tRNA synthetase subfamily. In terms of assembly, homodimer. The tRNA molecule binds across the dimer.

The protein resides in the cytoplasm. It catalyses the reaction tRNA(Ser) + L-serine + ATP = L-seryl-tRNA(Ser) + AMP + diphosphate + H(+). It carries out the reaction tRNA(Sec) + L-serine + ATP = L-seryl-tRNA(Sec) + AMP + diphosphate + H(+). It functions in the pathway aminoacyl-tRNA biosynthesis; selenocysteinyl-tRNA(Sec) biosynthesis; L-seryl-tRNA(Sec) from L-serine and tRNA(Sec): step 1/1. In terms of biological role, catalyzes the attachment of serine to tRNA(Ser). Is also able to aminoacylate tRNA(Sec) with serine, to form the misacylated tRNA L-seryl-tRNA(Sec), which will be further converted into selenocysteinyl-tRNA(Sec). This chain is Serine--tRNA ligase, found in Bordetella petrii (strain ATCC BAA-461 / DSM 12804 / CCUG 43448).